Reading from the N-terminus, the 665-residue chain is RNA-directed RNA polymerase (665 aa).

It carries out the reaction RNA(n) + a ribonucleoside 5'-triphosphate = RNA(n+1) + diphosphate. RNA-dependent RNA polymerase which replicates the viral genome. This chain is RNA-directed RNA polymerase, found in Atkinsonella hypoxylon (AhV).